A 286-amino-acid chain; its full sequence is Bifunctional protein FolD (286 aa).

NADP(+)-binding positions include 165–167, Ser190, and Val231; that span reads GRS.

The protein belongs to the tetrahydrofolate dehydrogenase/cyclohydrolase family. In terms of assembly, homodimer.

It catalyses the reaction (6R)-5,10-methylene-5,6,7,8-tetrahydrofolate + NADP(+) = (6R)-5,10-methenyltetrahydrofolate + NADPH. It carries out the reaction (6R)-5,10-methenyltetrahydrofolate + H2O = (6R)-10-formyltetrahydrofolate + H(+). It functions in the pathway one-carbon metabolism; tetrahydrofolate interconversion. Its function is as follows. Catalyzes the oxidation of 5,10-methylenetetrahydrofolate to 5,10-methenyltetrahydrofolate and then the hydrolysis of 5,10-methenyltetrahydrofolate to 10-formyltetrahydrofolate. This Bacillus mycoides (strain KBAB4) (Bacillus weihenstephanensis) protein is Bifunctional protein FolD.